Reading from the N-terminus, the 339-residue chain is 2-oxoisovalerate dehydrogenase subunit beta (339 aa).

Heterodimer of an alpha and a beta chain. The cofactor is thiamine diphosphate.

It carries out the reaction N(6)-[(R)-lipoyl]-L-lysyl-[protein] + 3-methyl-2-oxobutanoate + H(+) = N(6)-[(R)-S(8)-2-methylpropanoyldihydrolipoyl]-L-lysyl-[protein] + CO2. Its function is as follows. The branched-chain alpha-keto dehydrogenase complex catalyzes the overall conversion of alpha-keto acids to acyl-CoA and CO(2). It contains multiple copies of three enzymatic components: branched-chain alpha-keto acid decarboxylase (E1), lipoamide acyltransferase (E2) and lipoamide dehydrogenase (E3). In Pseudomonas putida (Arthrobacter siderocapsulatus), this protein is 2-oxoisovalerate dehydrogenase subunit beta (bkdA2).